The primary structure comprises 141 residues: HTH-type transcriptional regulator MntR (141 aa).

Residues 1–63 (MPTPSMEDYI…YEKYRGLVLT (63 aa)) enclose the HTH dtxR-type domain. Mn(2+) is bound by residues Asp-8, Glu-11, His-77, Glu-99, Glu-102, and His-103.

Belongs to the DtxR/MntR family. In terms of assembly, homodimer.

The protein resides in the cytoplasm. With respect to regulation, DNA binding is strongly activated by Mn(2+). Functionally, central regulator of manganese homeostasis. This Geobacillus kaustophilus (strain HTA426) protein is HTH-type transcriptional regulator MntR.